The primary structure comprises 388 residues: Succinate--CoA ligase [ADP-forming] subunit beta (388 aa).

The ATP-grasp domain maps to 9–244 (KEILRKYNVP…LDEEDANEIE (236 aa)). Residues Lys-46, 53-55 (GRG), Glu-99, Ala-102, and Glu-107 contribute to the ATP site. Mg(2+)-binding residues include Asn-199 and Asp-213. Substrate-binding positions include Asn-264 and 321-323 (GIM).

This sequence belongs to the succinate/malate CoA ligase beta subunit family. As to quaternary structure, heterotetramer of two alpha and two beta subunits. Mg(2+) serves as cofactor.

The catalysed reaction is succinate + ATP + CoA = succinyl-CoA + ADP + phosphate. It carries out the reaction GTP + succinate + CoA = succinyl-CoA + GDP + phosphate. The protein operates within carbohydrate metabolism; tricarboxylic acid cycle; succinate from succinyl-CoA (ligase route): step 1/1. Functionally, succinyl-CoA synthetase functions in the citric acid cycle (TCA), coupling the hydrolysis of succinyl-CoA to the synthesis of either ATP or GTP and thus represents the only step of substrate-level phosphorylation in the TCA. The beta subunit provides nucleotide specificity of the enzyme and binds the substrate succinate, while the binding sites for coenzyme A and phosphate are found in the alpha subunit. This Ralstonia nicotianae (strain ATCC BAA-1114 / GMI1000) (Ralstonia solanacearum) protein is Succinate--CoA ligase [ADP-forming] subunit beta.